We begin with the raw amino-acid sequence, 470 residues long: Putative multidrug resistance protein MdtD (470 aa).

Topologically, residues 1 to 11 (MTELPDNTRWQ) are periplasmic. The chain crosses the membrane as a helical span at residues 12-32 (LWIVAFGFFMQSLDTTIVNTA). Residues 33 to 48 (LPSMAKSLGESPLHMH) are Cytoplasmic-facing. Residues 49–69 (MVVVSYVLTVAVMLPASGWLA) traverse the membrane as a helical segment. The Periplasmic portion of the chain corresponds to 70–76 (DKIGVRN). The helical transmembrane segment at 77-97 (IFFAAIVLFTLGSLFCALSGT) threads the bilayer. Topologically, residues 98-101 (LNQL) are cytoplasmic. The helical transmembrane segment at 102-124 (VLARVLQGVGGAMMVPVGRLTVM) threads the bilayer. Residues 125–137 (KIVPRTQYMAAMT) lie on the Periplasmic side of the membrane. The chain crosses the membrane as a helical span at residues 138–158 (FVTLPGQIGPLLGPALGGVLV). At 159–164 (EYASWH) the chain is on the cytoplasmic side. A helical transmembrane segment spans residues 165 to 185 (WIFLINIPVGIVGAMATFMLM). The Periplasmic segment spans residues 186–196 (PNYTIETRRFD). A helical membrane pass occupies residues 197-217 (LPGFLLLAIGMAVLTLALDGS). The Cytoplasmic segment spans residues 218 to 224 (KSMGISP). Residues 225–245 (WTLAGLAAGGAAAILLYLFHA) traverse the membrane as a helical segment. The Periplasmic segment spans residues 246–262 (KKNSGALFSLRLFRTPT). Residues 263-283 (FSLGLLGSFAGRIGSGMLPFM) traverse the membrane as a helical segment. Residues 284 to 285 (TP) lie on the Cytoplasmic side of the membrane. A helical transmembrane segment spans residues 286–306 (VFLQIGLGFSPFHAGLMMIPM). The Periplasmic portion of the chain corresponds to 307–341 (VLGSMGMKRIVVQIVNRFGYRRVLVATTLGLALVS). The chain crosses the membrane as a helical span at residues 342–362 (LLFMSVALLGWYYLLPLVLLL). At 363 to 395 (QGMVNSARFSSMNTLTLKDLPDTLASSGNSLLS) the chain is on the cytoplasmic side. A helical transmembrane segment spans residues 396 to 416 (MIMQLSMSIGVTIAGMLLGMF). Residues 417–430 (GQQHIGIDSSATHH) lie on the Periplasmic side of the membrane. The helical transmembrane segment at 431 to 451 (VFMYTWLCMAVIIALPAIIFA) threads the bilayer. The Cytoplasmic portion of the chain corresponds to 452 to 470 (RVPNDTQQNMVISRRKRSL).

The protein belongs to the major facilitator superfamily. TCR/Tet family.

The protein localises to the cell inner membrane. The polypeptide is Putative multidrug resistance protein MdtD (Salmonella dublin (strain CT_02021853)).